Reading from the N-terminus, the 556-residue chain is Formate--tetrahydrofolate ligase (556 aa).

65–72 (TPAGEGKS) lines the ATP pocket.

It belongs to the formate--tetrahydrofolate ligase family.

It catalyses the reaction (6S)-5,6,7,8-tetrahydrofolate + formate + ATP = (6R)-10-formyltetrahydrofolate + ADP + phosphate. Its pathway is one-carbon metabolism; tetrahydrofolate interconversion. This is Formate--tetrahydrofolate ligase from Streptococcus mutans serotype c (strain ATCC 700610 / UA159).